The following is a 366-amino-acid chain: Galactoside alpha-(1,2)-fucosyltransferase 1 (366 aa).

Over 1 to 8 (MWPLSHRH) the chain is Cytoplasmic. Residues 9-25 (LCLAFLLVCVLSAISFF) form a helical; Signal-anchor for type II membrane protein membrane-spanning segment. Over 26–366 (LHVHQDSFRH…LSPLWTLAEP (341 aa)) the chain is Lumenal. Asn66, Asn302, and Asn328 each carry an N-linked (GlcNAc...) asparagine glycan.

It belongs to the glycosyltransferase 11 family.

The protein resides in the golgi apparatus. Its subcellular location is the golgi stack membrane. The catalysed reaction is a beta-D-galactosyl-(1-&gt;4)-N-acetyl-beta-D-glucosaminyl derivative + GDP-beta-L-fucose = an alpha-L-Fuc-(1-&gt;2)-beta-D-Gal-(1-&gt;4)-beta-D-GlcNAc derivative + GDP + H(+). It catalyses the reaction a ganglioside GA1 + GDP-beta-L-fucose = a ganglioside Fuc-GA1 + GDP + H(+). It carries out the reaction a beta-D-Gal-(1-&gt;3)-beta-D-GlcNAc-(1-&gt;3)-beta-D-Gal-(1-&gt;4)-beta-D-Glc-(1&lt;-&gt;1')-Cer(d18:1(4E)) + GDP-beta-L-fucose = alpha-L-fucosyl-(1-&gt;2)- beta-D-galactosyl-(1-&gt;3)-N-acetyl-beta-D-glucosaminyl-(1-&gt;3)-beta-D-galactosyl-(1-&gt;4)-beta-D-glucosyl-(1&lt;-&gt;1')-N-acylsphing-4-enine + GDP + H(+). The enzyme catalyses a neolactoside nLc4Cer(d18:1(4E)) + GDP-beta-L-fucose = a neolactoside IV(2)-alpha-Fuc-nLc4Cer(d18:1(4E)) + GDP + H(+). The catalysed reaction is a ganglioside GM1 + GDP-beta-L-fucose = a ganglioside Fuc-GM1 + GDP + H(+). It catalyses the reaction beta-D-galactosyl-(1-&gt;3)-N-acetyl-D-galactosamine + GDP-beta-L-fucose = alpha-L-fucosyl-(1-&gt;2)-beta-D-galactosyl-(1-&gt;3)-N-acetyl-D-galactosamine + GDP + H(+). It functions in the pathway protein modification; protein glycosylation. Functionally, catalyzes the transfer of L-fucose, from a guanosine diphosphate-beta-L-fucose, to the terminal galactose residue of glycoconjugates through an alpha(1,2) linkage leading to H antigen synthesis that is an intermediate substrate in the synthesis of ABO blood group antigens. H antigen is essential for maturation of the glomerular layer of the main olfactory bulb, in cell migration and early cell-cell contacts during tumor associated angiogenesis. Preferentially fucosylates soluble lactose and to a lesser extent fucosylates glycolipids gangliosides GA1 and GM1a. The polypeptide is Galactoside alpha-(1,2)-fucosyltransferase 1 (Alouatta belzebul (Red-handed howler monkey)).